Reading from the N-terminus, the 343-residue chain is N-acetyl-gamma-glutamyl-phosphate reductase (343 aa).

Cys-147 is an active-site residue.

It belongs to the NAGSA dehydrogenase family. Type 1 subfamily.

It is found in the cytoplasm. The catalysed reaction is N-acetyl-L-glutamate 5-semialdehyde + phosphate + NADP(+) = N-acetyl-L-glutamyl 5-phosphate + NADPH + H(+). The protein operates within amino-acid biosynthesis; L-arginine biosynthesis; N(2)-acetyl-L-ornithine from L-glutamate: step 3/4. In terms of biological role, catalyzes the NADPH-dependent reduction of N-acetyl-5-glutamyl phosphate to yield N-acetyl-L-glutamate 5-semialdehyde. In Listeria monocytogenes serotype 4a (strain HCC23), this protein is N-acetyl-gamma-glutamyl-phosphate reductase.